The primary structure comprises 128 residues: MSSQLISLVNTDRIIGKHVFGNLYDIDPKILNDKDFLHNLVLEAVKIANMKLVEIKSWNFGGKKGGVSVIALVEESHIALHTWTEYNYATLDVYTCGENSNPQAAFEYIVSQLKPKRYQMFYADRSSE.

Residue S76 is the Schiff-base intermediate with substrate; via pyruvic acid of the active site. S76 is modified (pyruvic acid (Ser); by autocatalysis). Residue H81 is the Proton acceptor; for processing activity of the active site. C96 (proton donor; for catalytic activity) is an active-site residue.

It belongs to the prokaryotic AdoMetDC family. Type 1 subfamily. As to quaternary structure, heterooctamer of four alpha and four beta chains arranged as a tetramer of alpha/beta heterodimers. The cofactor is pyruvate. Post-translationally, is synthesized initially as an inactive proenzyme. Formation of the active enzyme involves a self-maturation process in which the active site pyruvoyl group is generated from an internal serine residue via an autocatalytic post-translational modification. Two non-identical subunits are generated from the proenzyme in this reaction, and the pyruvate is formed at the N-terminus of the alpha chain, which is derived from the carboxyl end of the proenzyme. The post-translation cleavage follows an unusual pathway, termed non-hydrolytic serinolysis, in which the side chain hydroxyl group of the serine supplies its oxygen atom to form the C-terminus of the beta chain, while the remainder of the serine residue undergoes an oxidative deamination to produce ammonia and the pyruvoyl group blocking the N-terminus of the alpha chain.

It carries out the reaction L-arginine + H(+) = agmatine + CO2. Its pathway is amine and polyamine biosynthesis; agmatine biosynthesis; agmatine from L-arginine: step 1/1. Functionally, specifically catalyzes the decarboxylation of L-arginine to agmatine. Has no S-adenosylmethionine decarboxylase (AdoMetDC) activity. The sequence is that of Arginine decarboxylase proenzyme from Sulfurisphaera tokodaii (strain DSM 16993 / JCM 10545 / NBRC 100140 / 7) (Sulfolobus tokodaii).